Here is a 447-residue protein sequence, read N- to C-terminus: Adenylosuccinate synthetase (447 aa).

Residues 12 to 18 (GDEGKGK) and 40 to 42 (GHT) contribute to the GTP site. The active-site Proton acceptor is Asp13. Asp13 and Gly40 together coordinate Mg(2+). IMP is bound by residues 13-16 (DEGK), 38-41 (NAGH), Thr128, Arg142, Gln223, Thr238, and Arg302. Residue His41 is the Proton donor of the active site. Residue 298-304 (TTTGRRR) coordinates substrate. Residues Arg304, 330–332 (KLD), and 412–414 (SLG) each bind GTP.

It belongs to the adenylosuccinate synthetase family. In terms of assembly, homodimer. Requires Mg(2+) as cofactor.

The protein localises to the cytoplasm. The catalysed reaction is IMP + L-aspartate + GTP = N(6)-(1,2-dicarboxyethyl)-AMP + GDP + phosphate + 2 H(+). Its pathway is purine metabolism; AMP biosynthesis via de novo pathway; AMP from IMP: step 1/2. In terms of biological role, plays an important role in the de novo pathway of purine nucleotide biosynthesis. Catalyzes the first committed step in the biosynthesis of AMP from IMP. The chain is Adenylosuccinate synthetase from Microcystis aeruginosa (strain NIES-843 / IAM M-2473).